The sequence spans 278 residues: Large ribosomal subunit protein uL2 (278 aa).

Residues 201–278 (HGNINDGKAG…IMRSRHQRKK (78 aa)) are disordered. Residues 210–221 (GRSRWRGKRPHV) show a composition bias toward basic residues.

It belongs to the universal ribosomal protein uL2 family. Part of the 50S ribosomal subunit. Forms a bridge to the 30S subunit in the 70S ribosome.

In terms of biological role, one of the primary rRNA binding proteins. Required for association of the 30S and 50S subunits to form the 70S ribosome, for tRNA binding and peptide bond formation. It has been suggested to have peptidyltransferase activity; this is somewhat controversial. Makes several contacts with the 16S rRNA in the 70S ribosome. The sequence is that of Large ribosomal subunit protein uL2 from Sinorhizobium fredii (strain NBRC 101917 / NGR234).